A 328-amino-acid chain; its full sequence is Telomere-binding protein cav (328 aa).

The segment at 107-320 is required for binding to Su(var)205; that stretch reads RRKMVQPYPE…NISLQNSGSE (214 aa). The interval 139 to 228 is disordered; sequence DRWQKQKSQN…EFQTEHTDCP (90 aa). Composition is skewed to polar residues over residues 144-167 and 180-189; these read QKSQ…QQDS and ANTNRYSVSQ. Short sequence motifs (su(var)205-binding Pro-containing repeat) lie at residues 228–232 and 281–287; these read PETQM and PETETNE. Residues 295–319 show a composition bias toward polar residues; that stretch reads INSESMSIGPSIDSEGNISLQNSGS. Positions 295-328 are disordered; that stretch reads INSESMSIGPSIDSEGNISLQNSGSEPIDVDSMA.

In terms of assembly, interacts (via C-terminus) with Su(var)205 dimer (via hinge and chromoshadow domain) and with moi to form the terminin, telomere-capping, complex. Interacts with HP6, which is also part of the terminin complex.

Its subcellular location is the nucleus. The protein resides in the chromosome. It localises to the telomere. Binds to chromosome ends in a sequence-dependent manner and is required for telomere capping. The polypeptide is Telomere-binding protein cav (Drosophila erecta (Fruit fly)).